Consider the following 185-residue polypeptide: Keratin-associated protein 4-8 (185 aa).

25 tandem repeats follow at residues 14 to 18 (GCGQD), 19 to 23 (LCQET), 24 to 28 (CCCPS), 39 to 43 (CYRPS), 44 to 48 (YSVSC), 49 to 53 (CCRPQ), 54 to 58 (CCQSV), 59 to 63 (CCQPT), 64 to 68 (CCRPS), 69 to 73 (CCVSS), 74 to 78 (CCKPQ), 79 to 83 (CCQSV), 84 to 88 (CCQPT), 89 to 93 (CCHPS), 94 to 98 (CCISS), 99 to 103 (CCRPS), 104 to 108 (CCVSS), 109 to 113 (CCKPQ), 114 to 118 (CCQSV), 119 to 123 (CCQPN), 124 to 128 (CCRPS), 134 to 138 (CCRPS), 139 to 143 (CCESS), 144 to 148 (CCRPC), and 149 to 164 (CCLR…HTTC). The 25 X 5 AA repeats of C-C-[IKRQVHEC]-[SPRT]-[STCVQPR] stretch occupies residues 14–164 (GCGQDLCQET…CGRVSCHTTC (151 aa)).

This sequence belongs to the KRTAP type 4 family. Interacts with hair keratins. As to expression, expressed in the hair follicles.

Functionally, in the hair cortex, hair keratin intermediate filaments are embedded in an interfilamentous matrix, consisting of hair keratin-associated proteins (KRTAP), which are essential for the formation of a rigid and resistant hair shaft through their extensive disulfide bond cross-linking with abundant cysteine residues of hair keratins. The matrix proteins include the high-sulfur and high-glycine-tyrosine keratins. The sequence is that of Keratin-associated protein 4-8 (KRTAP4-8) from Homo sapiens (Human).